A 178-amino-acid chain; its full sequence is Large ribosomal subunit protein eL20 (178 aa).

It belongs to the eukaryotic ribosomal protein eL20 family.

This Oryza sativa subsp. japonica (Rice) protein is Large ribosomal subunit protein eL20 (RPL18A).